Reading from the N-terminus, the 81-residue chain is UPF0248 protein SSO2687 (81 aa).

This sequence belongs to the UPF0248 family.

This chain is UPF0248 protein SSO2687, found in Saccharolobus solfataricus (strain ATCC 35092 / DSM 1617 / JCM 11322 / P2) (Sulfolobus solfataricus).